Consider the following 570-residue polypeptide: Periplasmic trehalase (570 aa).

The N-terminal stretch at 1 to 34 (MIPPEIRRSVLLQKAIKLALAGTLLTFASFSATA) is a signal peptide. Residues R159, 166 to 167 (WD), N203, 212 to 214 (HSQ), 284 to 286 (RPE), and G317 each bind substrate. Residues D319 and E503 each act as proton donor/acceptor in the active site. E518 is a binding site for substrate. The tract at residues 544 to 570 (KPCDSVPSTRPASLSATPTKTPSAATQ) is disordered. Low complexity predominate over residues 554-570 (PASLSATPTKTPSAATQ).

Belongs to the glycosyl hydrolase 37 family. As to quaternary structure, monomer.

Its subcellular location is the periplasm. It catalyses the reaction alpha,alpha-trehalose + H2O = alpha-D-glucose + beta-D-glucose. Provides the cells with the ability to utilize trehalose at high osmolarity by splitting it into glucose molecules that can subsequently be taken up by the phosphotransferase-mediated uptake system. This is Periplasmic trehalase from Salmonella paratyphi C (strain RKS4594).